Consider the following 73-residue polypeptide: Small ribosomal subunit protein eS27 (73 aa).

Residues Cys28, Cys31, Cys47, and Cys50 each contribute to the Zn(2+) site. The C4-type zinc finger occupies 28–50 (CPKCGNRQVVFSHSTFRARCLNC).

It belongs to the eukaryotic ribosomal protein eS27 family. In terms of assembly, part of the 30S ribosomal subunit. Zn(2+) serves as cofactor.

In Aeropyrum pernix (strain ATCC 700893 / DSM 11879 / JCM 9820 / NBRC 100138 / K1), this protein is Small ribosomal subunit protein eS27.